Consider the following 297-residue polypeptide: Protoheme IX farnesyltransferase (297 aa).

8 helical membrane-spanning segments follow: residues 15 to 35, 39 to 59, 91 to 111, 112 to 132, 139 to 159, 166 to 186, 220 to 240, and 265 to 285; these read VVAL…PAPY, GLLV…AAVF, VWGV…VNII, TVVL…LYLK, IVIG…AVSG, ACLL…ALAI, LLLV…YLVI, and AWST…ALLF.

This sequence belongs to the UbiA prenyltransferase family. Protoheme IX farnesyltransferase subfamily.

The protein localises to the cell inner membrane. It catalyses the reaction heme b + (2E,6E)-farnesyl diphosphate + H2O = Fe(II)-heme o + diphosphate. The protein operates within porphyrin-containing compound metabolism; heme O biosynthesis; heme O from protoheme: step 1/1. In terms of biological role, converts heme B (protoheme IX) to heme O by substitution of the vinyl group on carbon 2 of heme B porphyrin ring with a hydroxyethyl farnesyl side group. This is Protoheme IX farnesyltransferase from Vesicomyosocius okutanii subsp. Calyptogena okutanii (strain HA).